The sequence spans 348 residues: Rhodopsin (348 aa).

An N-acetylmethionine modification is found at methionine 1. Over 1-36 the chain is Extracellular; it reads MNGTEGPNFYVPFSNATGVVRSPFEYPQYYLAEPWQ. Residues asparagine 2 and asparagine 15 are each glycosylated (N-linked (GlcNAc...) asparagine). A helical membrane pass occupies residues 37-61; the sequence is FSMLAAYMFLLIVLGFPINFLTLYV. At 62-73 the chain is on the cytoplasmic side; the sequence is TVQHKKLRTPLN. The helical transmembrane segment at 74 to 96 threads the bilayer; the sequence is YILLNLAVADLFMVFGGFTTTLY. The Extracellular portion of the chain corresponds to 97–110; that stretch reads TSLHGYFVFGPTGC. Cysteines 110 and 187 form a disulfide. A helical membrane pass occupies residues 111 to 133; it reads NAEGFFATLGGEIALWSLVVLAI. Positions 134 to 136 match the 'Ionic lock' involved in activated form stabilization motif; sequence ERY. The Cytoplasmic segment spans residues 134 to 152; it reads ERYVVVCKPMSNFRFGENH. The helical transmembrane segment at 153 to 173 threads the bilayer; sequence AIMGVAFTWVMALACAAPPLF. Over 174-202 the chain is Extracellular; the sequence is GWSRYIPEGLQCSCGIDYYTLKPEVNNES. Glutamate 201 lines the Zn(2+) pocket. The chain crosses the membrane as a helical span at residues 203–224; it reads FVIYMFVVHFTIPMIVIFFCYG. Over 225–252 the chain is Cytoplasmic; sequence QLVFTVKEARAQQQESATTQKAEKEVTR. A helical membrane pass occupies residues 253 to 274; sequence MVIIMVIAFLICWVPYASVAFY. Over 275–286 the chain is Extracellular; that stretch reads IFTHQGSNFGPI. Residue glutamine 279 coordinates Zn(2+). A helical transmembrane segment spans residues 287 to 308; sequence FMTIPAFFAKSASIYNPVIYIM. Lysine 296 bears the N6-(retinylidene)lysine mark. Over 309-348 the chain is Cytoplasmic; that stretch reads MNKQFRNCMLTTICCGKNPLGDDEASATVSKTETSQVAPA. 2 S-palmitoyl cysteine lipidation sites follow: cysteine 322 and cysteine 323. The interaction with SAG stretch occupies residues 330–348; sequence DDEASATVSKTETSQVAPA. Residue serine 334 is modified to Phosphoserine. Threonine 336 carries the post-translational modification Phosphothreonine. Serine 338 bears the Phosphoserine mark. Phosphothreonine occurs at positions 340 and 342. Serine 343 bears the Phosphoserine mark.

It belongs to the G-protein coupled receptor 1 family. Opsin subfamily. As to quaternary structure, homodimer. May form a complex composed of RHO, GRK1 and RCVRN in a Ca(2+)-dependent manner; RCVRN prevents the interaction between GRK1 and RHO. Interacts with GRK1. Interacts (phosphorylated form) with SAG. Interacts with GNAT1. Interacts with GNAT3. SAG and G-proteins compete for a common binding site. Interacts with PRCD; the interaction promotes PRCD stability. Forms a complex with ASAP1 and ARF4. Forms a complex with ASAP1, RAB11A, Rabin8/RAB3IP, ARF4 and RAB11FIP3; the complex regulates Golgi-to-cilia rhodopsin/RHO transport in photoreceptors. In terms of processing, phosphorylated on some or all of the serine and threonine residues present in the C-terminal region. Contains one covalently linked retinal chromophore. Upon light absorption, the covalently bound 11-cis-retinal is converted to all-trans-retinal. After hydrolysis of the Schiff base and release of the covalently bound all-trans-retinal, active rhodopsin is regenerated by binding of a fresh molecule of 11-cis-retinal.

The protein resides in the membrane. It localises to the cell projection. Its subcellular location is the cilium. The protein localises to the photoreceptor outer segment. Functionally, photoreceptor required for image-forming vision at low light intensity. Required for photoreceptor cell viability after birth. Light-induced isomerization of 11-cis to all-trans retinal triggers a conformational change that activates signaling via G-proteins. Subsequent receptor phosphorylation mediates displacement of the bound G-protein alpha subunit by the arrestin SAG and terminates signaling. In Macaca fascicularis (Crab-eating macaque), this protein is Rhodopsin (RHO).